The sequence spans 176 residues: MDSSFTPIEQMLKFRASRHEDFPYQEILLTRLCMHMQSKLLENRNKMLKAQGINETLFMALITLESQENHSIQPSELSCALGSSRTNATRIADELEKRGWIERRESDNDRRCLHLQLTEKGHEFLREVLPPQHNCLHQLWSALSTTEKDQLEQITRKLLSRLDQMEQDGVVLEAMS.

The 135-residue stretch at glutamate 26–serine 160 folds into the HTH marR-type domain.

Its function is as follows. Negative regulator of the multidrug operon emrAB. The chain is Transcriptional repressor MprA (mprA) from Escherichia coli O157:H7.